The primary structure comprises 364 residues: MQEIIPDFLEECEFVDTSLAGDDLFAILESLEGAGEISPTAASTPKDGTTSSKELVKDQDYENSSPKRKKQRLETRKEEDEEEEDGDGEAEEDNKQDGQQKMSHVTVERNRRKQMNEHLTVLRSLMPCFYVKRGDQASIIGGVVEYISELQQVLQSLEAKKQRKTYAEVLSPRVVPSPRPSPPVLSPRKPPLSPRINHHQIHHHLLLPPISPRTPQPTSPYRAIPPQLPLIPQPPLRSYSSLASCSSLGDPPPYSPASSSSSPSVSSNHESSVINELVANSKSALADVEVKFSGANVLLKTVSHKIPGQVMKIIAALEDLALEILQVNINTVDETMLNSFTIKIGIECQLSAEELAQQIQQTFC.

The tract at residues 35 to 109 (GEISPTAAST…QKMSHVTVER (75 aa)) is disordered. A Phosphoserine; by ASK7 modification is found at Ser38. Residue Thr40 is modified to Phosphothreonine; by ASK7. Residues 40–53 (TAASTPKDGTTSSK) show a composition bias toward polar residues. Ser43 is subject to Phosphoserine; by ASK7. Thr44 is modified (phosphothreonine; by ASK7). At Ser65 the chain carries Phosphoserine; by ASK7. Residues 79 to 92 (EDEEEEDGDGEAEE) are compositionally biased toward acidic residues. A basic motif region spans residues 99 to 112 (QQKMSHVTVERNRR). Residues 99–150 (QQKMSHVTVERNRRKQMNEHLTVLRSLMPCFYVKRGDQASIIGGVVEYISEL) form the bHLH domain. A helix-loop-helix motif region spans residues 113-150 (KQMNEHLTVLRSLMPCFYVKRGDQASIIGGVVEYISEL). Phosphoserine; by ASK7 is present on Ser171. The tract at residues 171–227 (SPRVVPSPRPSPPVLSPRKPPLSPRINHHQIHHHLLLPPISPRTPQPTSPYRAIPPQ) is disordered. Pro residues predominate over residues 175 to 193 (VPSPRPSPPVLSPRKPPLS). Ser177 carries the phosphoserine; by ASK7, MPK3 and MPK6 modification. Ser181 carries the post-translational modification Phosphoserine; by ASK7. Ser186 is modified (phosphoserine; by CDKA-1, ASK7, MPK3 and MPK6). Ser193 is modified (phosphoserine; by MPK3 and MPK6). Positions 196-205 (INHHQIHHHL) are enriched in basic residues. A compositionally biased stretch (pro residues) spans 209-218 (PISPRTPQPT). Ser211 bears the Phosphoserine; by MPK3 and MPK6 mark. Thr214 is modified (phosphothreonine; by ASK7, MPK3 and MPK6). Ser219 carries the post-translational modification Phosphoserine; by ASK7, MPK3 and MPK6.

As to quaternary structure, homodimer. Forms dimers with SCRM and SCRM2. May interact with CDKA-1. Phosphorylated by ASK7/BIN2 and ASK3/SK12; this post-translational modification inhibits activity and limit epidermal cell proliferation. Phosphorylation by MPK3 and MPK6 leads to the inhibition of stomatal fate and to degradation. Stabilized by CDKA-1-mediated phosphorylation at Ser-186 which promotes stomatal development. Expressed in developing leaf epidermis. Reduced accumulation in the stomatal lineage ground cells (SLGCs) where BASL is polarized in the cell cortex. Observed in small cells of non-protruding hypocotyl cell files and of developing cotyledon epidermis. Restricted to meristemoids (stomatal precursor cell) in leaves epidermis, mostly in dividing cells of non-protruding cell files.

The protein resides in the nucleus. With respect to regulation, negatively regulated through phosphorylation by the MAPK module. Activity is constrained by polarized BASL in stomatal lineage ground cells (SLGCs) undergoing ACD. Functionally, transcription factor acting as an integration node for stomata and brassinosteroid (BR) signaling pathways to control stomatal initiation and development. Activates transcription when in the presence of SCRM/ICE1. Functions as a dimer with SCRM or SCRM2 during stomatal initiation. Required for the initiation, the spacing and the formation of stomata, by promoting the first asymmetric cell divisions. Together with FMA and MUTE, modulates the stomata formation. Involved in the regulation of growth reduction under osmotic stress (e.g. mannitol), associated with a quick decrease of meristemoid mother cells (MMCs) number lower stomatal index and density. The chain is Transcription factor SPEECHLESS from Arabidopsis thaliana (Mouse-ear cress).